A 159-amino-acid polypeptide reads, in one-letter code: Transcription elongation factor GreA (159 aa).

Positions 2 to 77 form a coiled coil; that stretch reads EENKEFLLTQ…LENMVRKAVI (76 aa).

The protein belongs to the GreA/GreB family.

Necessary for efficient RNA polymerase transcription elongation past template-encoded arresting sites. The arresting sites in DNA have the property of trapping a certain fraction of elongating RNA polymerases that pass through, resulting in locked ternary complexes. Cleavage of the nascent transcript by cleavage factors such as GreA or GreB allows the resumption of elongation from the new 3'terminus. GreA releases sequences of 2 to 3 nucleotides. In Clostridioides difficile (strain 630) (Peptoclostridium difficile), this protein is Transcription elongation factor GreA.